Consider the following 259-residue polypeptide: FAD-linked sulfhydryl oxidase (259 aa).

Belongs to the baculoviridae p33 family. Homodimer.

It localises to the host cytoplasm. The protein localises to the host nucleus. The enzyme catalyses 2 R'C(R)SH + O2 = R'C(R)S-S(R)CR' + H2O2. Functionally, functional FAD-linked sulfhydryl oxidase that is required for infectious budded virion (BV) production and for the formation of enveloped occluded virion (ODV). The sequence is that of FAD-linked sulfhydryl oxidase (P33) from Lepidoptera (butterflies and moths).